The primary structure comprises 237 residues: NADPH-dependent FMN reductase ArsH (237 aa).

FMN-binding positions include 39-46 and 102-107; these read SNRECSYS and SPERHG.

The protein belongs to the ArsH family. As to quaternary structure, homotetramer. Requires FMN as cofactor.

In terms of biological role, has NADPH-dependent FMN reductase activity and high NADPH-dependent ferric reductase activity with highest activity for Fe(3+) as substrate. No activity with NADH, iron trichloride, Cu(2+) or Ag(+). May be involved in cytosolic ferric iron assimilation as an NADPH-dependent ferric reductase in vivo. This Acidithiobacillus ferrooxidans (strain ATCC 23270 / DSM 14882 / CIP 104768 / NCIMB 8455) (Ferrobacillus ferrooxidans (strain ATCC 23270)) protein is NADPH-dependent FMN reductase ArsH.